The following is a 337-amino-acid chain: C5a anaphylatoxin chemotactic receptor 2 (337 aa).

The Extracellular portion of the chain corresponds to 1-38 (MGNDSVSYEYGDYSDLSDRPVDCLDGACLAIDPLRVAP). Asn3 is a glycosylation site (N-linked (GlcNAc...) asparagine). The chain crosses the membrane as a helical span at residues 39 to 61 (LPLYAAIFLVGVPGNAMVAWVAG). Topologically, residues 62–72 (KVARRRVGATW) are cytoplasmic. The chain crosses the membrane as a helical span at residues 73-95 (LLHLAVADLLCCLSLPILAVPIA). Residues 96–114 (RGGHWPYGAVGCRALPSII) lie on the Extracellular side of the membrane. A disulfide bond links Cys107 and Cys186. A helical transmembrane segment spans residues 115–137 (LLTMYASVLLLAALSADLCFLAL). Over 138 to 149 (GPAWWSTVQRAC) the chain is Cytoplasmic. Residues 150-172 (GVQVACGAAWTLALLLTVPSAIY) form a helical membrane-spanning segment. Residues 173–202 (RRLHQEHFPARLQCVVDYGGSSSTENAVTA) lie on the Extracellular side of the membrane. Residues 203–225 (IRFLFGFLGPLVAVASCHSALLC) form a helical membrane-spanning segment. Residues 226-237 (WAARRCRPLGTA) are Cytoplasmic-facing. The chain crosses the membrane as a helical span at residues 238 to 260 (IVVGFFVCWAPYHLLGLVLTVAA). Over 261–274 (PNSALLARALRAEP) the chain is Extracellular. The chain crosses the membrane as a helical span at residues 275 to 294 (LIVGLALAHSCLNPMLFLYF). At 295–337 (GRAQLRRSLPAACHWALRESQGQDESVDSKKSTSHDLVSEMEV) the chain is on the cytoplasmic side. Ser320 is modified (phosphoserine).

The protein belongs to the G-protein coupled receptor 1 family. Interacts with C3 (the anaphylatoxin peptide C3a and the adipogenic hormone ASP); the interaction occurs with higher affinity for ASP, enhancing the phosphorylation and activation of GPR77, recruitment of ARRB2 to the cell surface and endocytosis of GRP77. As to expression, frontal cortex, hippocampus, hypothalamus, pons and liver.

It localises to the cell membrane. Receptor for the chemotactic and inflammatory C3a, C4a and C5a anaphylatoxin peptides and also for their dearginated forms ASP/C3adesArg, C4adesArg and C5adesArg respectively. Couples weakly to G(i)-mediated signaling pathways. In Homo sapiens (Human), this protein is C5a anaphylatoxin chemotactic receptor 2 (C5AR2).